The following is a 170-amino-acid chain: NADPH-dependent 7-cyano-7-deazaguanine reductase (170 aa).

The active-site Thioimide intermediate is the cysteine 58. Aspartate 65 acts as the Proton donor in catalysis. Substrate is bound by residues 80–82 (VES) and 99–100 (HE).

It belongs to the GTP cyclohydrolase I family. QueF type 1 subfamily.

It localises to the cytoplasm. The catalysed reaction is 7-aminomethyl-7-carbaguanine + 2 NADP(+) = 7-cyano-7-deazaguanine + 2 NADPH + 3 H(+). It participates in tRNA modification; tRNA-queuosine biosynthesis. Functionally, catalyzes the NADPH-dependent reduction of 7-cyano-7-deazaguanine (preQ0) to 7-aminomethyl-7-deazaguanine (preQ1). The polypeptide is NADPH-dependent 7-cyano-7-deazaguanine reductase (Bdellovibrio bacteriovorus (strain ATCC 15356 / DSM 50701 / NCIMB 9529 / HD100)).